The chain runs to 329 residues: MASQLTDAFARKFYYLRLSITDVCNFRCTYCLPDGYKPSGVTNKGFLTVDEIRRVTRAFASLGTEKVRLTGGEPSLRRDFTDIIAAVRENDAIRQIAVTTNGYRLERDVANWRDAGLTGINVSVDSLDARQFHAITGQDKFNQVMAGIDAAFEAGFEKVKVNTVLMRDVNHHQLDTFLNWIQHRPIQLRFIELMETGEGIELFRKHHISGQVLRNELLRRGWIHQLRQRSDGPAQVFCHPDYAGEIGLIMPYEKDFCATCNRLRVSSIGKLHLCLFGEGGVNLRDLLEDDTQQQALEARISAALREKKQTHFLHQNNTGITQNLSYIGG.

The Radical SAM core domain maps to 8 to 234 (AFARKFYYLR…QLRQRSDGPA (227 aa)). Arg17 provides a ligand contact to GTP. [4Fe-4S] cluster-binding residues include Cys24 and Cys28. Tyr30 contributes to the S-adenosyl-L-methionine binding site. Cys31 is a binding site for [4Fe-4S] cluster. GTP is bound at residue Arg68. Gly72 provides a ligand contact to S-adenosyl-L-methionine. Thr99 is a binding site for GTP. Residue Ser123 coordinates S-adenosyl-L-methionine. GTP is bound at residue Lys160. Met194 contacts S-adenosyl-L-methionine. 2 residues coordinate [4Fe-4S] cluster: Cys257 and Cys260. GTP is bound at residue 262–264 (RLR). Residue Cys274 participates in [4Fe-4S] cluster binding.

The protein belongs to the radical SAM superfamily. MoaA family. In terms of assembly, monomer and homodimer. [4Fe-4S] cluster is required as a cofactor.

It carries out the reaction GTP + AH2 + S-adenosyl-L-methionine = (8S)-3',8-cyclo-7,8-dihydroguanosine 5'-triphosphate + 5'-deoxyadenosine + L-methionine + A + H(+). The protein operates within cofactor biosynthesis; molybdopterin biosynthesis. Catalyzes the cyclization of GTP to (8S)-3',8-cyclo-7,8-dihydroguanosine 5'-triphosphate. In Escherichia coli O45:K1 (strain S88 / ExPEC), this protein is GTP 3',8-cyclase.